Here is a 441-residue protein sequence, read N- to C-terminus: Tol-Pal system protein TolB (441 aa).

An N-terminal signal peptide occupies residues 1 to 39 (MPTMTPAFSRASLSEALRSYGLALLLFLATLLAWQPAHA).

This sequence belongs to the TolB family. In terms of assembly, the Tol-Pal system is composed of five core proteins: the inner membrane proteins TolA, TolQ and TolR, the periplasmic protein TolB and the outer membrane protein Pal. They form a network linking the inner and outer membranes and the peptidoglycan layer.

The protein resides in the periplasm. Functionally, part of the Tol-Pal system, which plays a role in outer membrane invagination during cell division and is important for maintaining outer membrane integrity. The chain is Tol-Pal system protein TolB from Bordetella avium (strain 197N).